The following is a 349-amino-acid chain: DCD domain-containing protein NRP (349 aa).

Positions Asn-157 to Phe-201 are disordered. Basic and acidic residues predominate over residues Arg-188–Phe-201. In terms of domain architecture, DCD spans Glu-214–Asp-346.

As to quaternary structure, interacts with CRY2 in the cytoplasm. Interacts with Verticillium dahliae PevD1. Interacts with FYPP3. As to expression, highly expressed in sensecent leaves, cauline leaves and sepals. Expressed in the shoot apical meristem, leaf veins, central cylinder, root hair zone, root tips, rosette leaves, flowers and siliques.

The protein resides in the cytoplasm. Functionally, contributes to the initial phase of responses to abiotic and biotic stress signals. Binds FYPP3 and facilitates FYPP3 degradation to promote abscisic acid (ABA) response. The polypeptide is DCD domain-containing protein NRP (Arabidopsis thaliana (Mouse-ear cress)).